The chain runs to 261 residues: Methyl-coenzyme M reductase subunit gamma (261 aa).

Residue Arg-123 coordinates coenzyme M.

This sequence belongs to the methyl-coenzyme M reductase gamma subunit family. In terms of assembly, MCR is a hexamer of two alpha, two beta, and two gamma chains, forming a dimer of heterotrimers. Coenzyme F430 is required as a cofactor.

It is found in the cytoplasm. The catalysed reaction is coenzyme B + methyl-coenzyme M = methane + coenzyme M-coenzyme B heterodisulfide. The protein operates within one-carbon metabolism; methyl-coenzyme M reduction; methane from methyl-coenzyme M: step 1/1. Component of the methyl-coenzyme M reductase (MCR) I that catalyzes the reductive cleavage of methyl-coenzyme M (CoM-S-CH3 or 2-(methylthio)ethanesulfonate) using coenzyme B (CoB or 7-mercaptoheptanoylthreonine phosphate) as reductant which results in the production of methane and the mixed heterodisulfide of CoB and CoM (CoM-S-S-CoB). This is the final step in methanogenesis. This Methanococcus voltae protein is Methyl-coenzyme M reductase subunit gamma (mcrG).